We begin with the raw amino-acid sequence, 179 residues long: uncharacterized protein (179 aa).

The disordered stretch occupies residues 160–179; the sequence is QPIEPNGTQPATETKTPVGV. Positions 165-179 are enriched in polar residues; it reads NGTQPATETKTPVGV.

Belongs to the Dps family.

This is an uncharacterized protein from Anabaena variabilis.